Here is a 389-residue protein sequence, read N- to C-terminus: Probable nitrate transporter NarT (389 aa).

12 helical membrane-spanning segments follow: residues 14–34 (TLSL…MPFI), 45–65 (ISII…PFGY), 69–89 (IVGA…PIFF), 97–117 (GMLM…SVGV), 139–159 (GNIG…IIGW), 161–181 (TTVR…FIFG), 211–231 (WYFI…NYLV), 246–266 (GVFI…GDKF), 268–288 (AVKV…ILGI), 294–314 (LFTV…GLIF), 331–351 (IVSM…TYVA), and 353–373 (LTGS…IALF).

Belongs to the major facilitator superfamily. Nitrate/nitrite porter (TC 2.A.1.8) family.

It localises to the cell membrane. Functionally, probably required for nitrate uptake under anoxic conditions. Also possibly involved in excretion of nitrite produced by the dissimilatory reduction of nitrate. This is Probable nitrate transporter NarT (narT) from Staphylococcus aureus (strain JH9).